Here is a 1012-residue protein sequence, read N- to C-terminus: Structural polyprotein (1012 aa).

Aspartate 30 is an a divalent metal cation binding site. Residues 514 to 755 enclose the Peptidase S50 domain; that stretch reads ADKGYEVVAN…AGRQFHLALA (242 aa). Serine 653 serves as the catalytic Nucleophile. Lysine 692 is a catalytic residue. The interval 972 to 1012 is disordered; that stretch reads MKHRNPRRAPPKPKPKPNAPSQRPPGRLGRWIRTVSDEDLE. Positions 975-986 are enriched in basic residues; it reads RNPRRAPPKPKP. The interval 1003–1012 is interaction with VP1 protein; it reads IRTVSDEDLE.

As to quaternary structure, homotrimer. A central divalent metal stabilizes the VP2 trimer. Interacts with host ITGA4/ITGB1. In terms of assembly, homodimer. Interacts (via C-terminus) with VP1 in the cytoplasm. Interacts with VP2. In terms of processing, specific enzymatic cleavages yield mature proteins. The capsid assembly seems to be regulated by polyprotein processing. The protease VP4 cleaves itself off the polyprotein, thus releasing pre-VP2 and VP3 within the infected cell. During capsid assembly, the C-terminus of pre-VP2 is further processed by VP4, giving rise to VP2, the external capsid protein and three small peptides that all stay closely associated with the capsid.

It localises to the virion. Its subcellular location is the host cytoplasm. Capsid protein VP2 self assembles to form an icosahedral capsid with a T=13 symmetry, about 70 nm in diameter, and consisting of 260 VP2 trimers. The capsid encapsulates the genomic dsRNA. VP2 is also involved in attachment and entry into the host cell by interacting with host ITGA4/ITGB1. In terms of biological role, the precursor of VP2 plays an important role in capsid assembly. First, pre-VP2 and VP2 oligomers assemble to form a procapsid. Then, the pre-VP2 intermediates may be processed into VP2 proteins by proteolytic cleavage mediated by VP4 to obtain the mature virion. The final capsid is composed of pentamers and hexamers but VP2 has a natural tendency to assemble into all-pentameric structures. Therefore pre-VP2 may be required to allow formation of the hexameric structures. Functionally, protease VP4 is a serine protease that cleaves the polyprotein into its final products. Pre-VP2 is first partially cleaved, and may be completely processed by VP4 upon capsid maturation. Its function is as follows. Capsid protein VP3 plays a key role in virion assembly by providing a scaffold for the capsid made of VP2. May self-assemble to form a T=4-like icosahedral inner-capsid composed of at least 180 trimers. Plays a role in genomic RNA packaging by recruiting VP1 into the capsid and interacting with the dsRNA genome segments to form a ribonucleoprotein complex. Additionally, the interaction of the VP3 C-terminal tail with VP1 removes the inherent structural blockade of the polymerase active site. Thus, VP3 can also function as a transcriptional activator. Structural peptide 1 is a small peptide derived from pre-VP2 C-terminus. It destabilizes and perforates cell membranes, suggesting a role during entry. In terms of biological role, structural peptide 2 is a small peptide derived from pVP2 C-terminus. It is not essential for the virus viability, but viral growth is affected when missing. Functionally, structural peptide 3 is a small peptide derived from pVP2 C-terminus. It is not essential for the virus viability, but viral growth is affected when missing. Its function is as follows. Structural peptide 4 is a small peptide derived from pVP2 C-terminus. It is essential for the virus viability. This is Structural polyprotein from Gallus gallus (Chicken).